Here is a 351-residue protein sequence, read N- to C-terminus: Probable minor fimbrial subunit LpfD (351 aa).

The N-terminal stretch at 1 to 22 is a signal peptide; sequence MKAAIALSLLGCVFGFSGKAFA.

It belongs to the fimbrial protein family.

Its subcellular location is the fimbrium. Its function is as follows. Part of the lpfABCC'DE fimbrial operon. LP fimbriae may participate in the interaction with eukaryotic cells by assisting in microcolony formation. This chain is Probable minor fimbrial subunit LpfD (lpfD), found in Escherichia coli O157:H7.